We begin with the raw amino-acid sequence, 438 residues long: V-type ATP synthase beta chain (438 aa).

This sequence belongs to the ATPase alpha/beta chains family.

Its function is as follows. Produces ATP from ADP in the presence of a proton gradient across the membrane. The V-type beta chain is a regulatory subunit. The chain is V-type ATP synthase beta chain from Protochlamydia amoebophila (strain UWE25).